The chain runs to 289 residues: B- and T-lymphocyte attenuator (289 aa).

The signal sequence occupies residues 1–30; it reads MKTLPAMLGTGKLFWVFFLIPYLDIWNIHG. Residues 31–132 enclose the Ig-like V-type domain; sequence KESCDVQLYI…LIESHSTTLY (102 aa). At 31-157 the chain is on the extracellular side; it reads KESCDVQLYI…MASRPWLLYR (127 aa). Intrachain disulfides connect Cys-34–Cys-63, Cys-58–Cys-115, and Cys-72–Cys-79. Residues Asn-75, Asn-94, and Asn-110 are each glycosylated (N-linked (GlcNAc...) asparagine). Residues 158–178 traverse the membrane as a helical segment; sequence LLPLGGLPLLITTCFCLFCCL. The Cytoplasmic portion of the chain corresponds to 179-289; sequence RRHQGKQNEL…TEYASICVRS (111 aa).

As to quaternary structure, interacts with tyrosine phosphatases PTPN6/SHP-1 and PTPN11/SHP-2. Interacts with TNFRSF14/HVEM (via cysteine-rich domain 1). Post-translationally, phosphorylated on Tyr residues by TNFRSF14 and by antigen receptors cross-linking, both inducing association with PTPN6 and PTPN11. In terms of processing, N-glycosylated.

It localises to the cell membrane. Inhibitory receptor on lymphocytes that negatively regulates antigen receptor signaling via PTPN6/SHP-1 and PTPN11/SHP-2. May interact in cis (on the same cell) or in trans (on other cells) with TNFRSF14. In cis interactions, appears to play an immune regulatory role inhibiting in trans interactions in naive T cells to maintain a resting state. In trans interactions, can predominate during adaptive immune response to provide survival signals to effector T cells. The protein is B- and T-lymphocyte attenuator of Homo sapiens (Human).